A 435-amino-acid chain; its full sequence is Flavonol 7-O-rhamnosyltransferase (435 aa).

UDP is bound at residue glutamine 18. Glutamine 18 is a binding site for UDP-beta-L-rhamnose. The active-site Proton acceptor is histidine 21. A quercetin-binding site is contributed by histidine 21. Aspartate 119 acts as the Charge relay in catalysis. Positions 250, 315, 332, 336, 337, and 340 each coordinate UDP. Positions 250, 315, 332, 336, 337, and 340 each coordinate UDP-beta-L-rhamnose.

Belongs to the UDP-glycosyltransferase family. In terms of tissue distribution, highly expressed in floral buds. Expressed in stems, leaves and flowers. Expressed at low levels in roots and siliques. Expressed on the adaxial side of cotyledons and emerging leaves, in trichomes, root columella cells, and the late elongation/early differentiation zone of roots.

The enzyme catalyses quercitrin + UDP-beta-L-rhamnose = quercetin 3,7-bis-O-alpha-L-rhamnoside + UDP + H(+). It carries out the reaction quercetin 3-O-beta-D-glucoside + UDP-beta-L-rhamnose = quercetin 3-O-beta-D-glucoside-7-O-alpha-L-rhamnoside + UDP + H(+). The protein operates within flavonoid metabolism. Functionally, flavonol 7-O-rhamnosyltransferase that catalyzes the transfer of rhamnose from UDP-rhamnose to the 7-OH position of 3-O-glycosylated flavonols, such as kaempferol 3-O-rhamnoside, kaempferol 3-O-glucoside, quercetin 3-O-glucoside, quercetin 3-O-galactoside, quercetin 3-O-rhamnoside and isorhamnetin 3-O-glucoside. Is able to glycosylate the flavonols quercetin and kaempferol to yield quercetin 7-O-rhamnoside and kaempferol 7-O-rhamnoside. Shows a strict specificity for UDP-rhamnose as sugar donor. Does not act on 3-O-glycosylated anthocyanins. The accumulation of kaempferol 3-O-rhamnoside-7-O-rhamnoside inhibits basipetal auxin transport, which influences auxin distribution and plant organ development. In Arabidopsis thaliana (Mouse-ear cress), this protein is Flavonol 7-O-rhamnosyltransferase.